The following is a 126-amino-acid chain: Large ribosomal subunit protein bL17 (126 aa).

It belongs to the bacterial ribosomal protein bL17 family. As to quaternary structure, part of the 50S ribosomal subunit. Contacts protein L32.

This is Large ribosomal subunit protein bL17 from Vibrio parahaemolyticus serotype O3:K6 (strain RIMD 2210633).